The chain runs to 379 residues: MTSETSVNLLDFDAEGLVAYCGSLGEKPFRAKQLQRWIHQYNAGDFDGMTDLAKSLREKLKGRASIVMPEIASDHVSTDGTRKWLIDVGNGNAVETVFIPEETRGTLCVSSQAGCAVNCRFCSTGKQGFSRNLSTAEIIGQLRMAEFALRASLGRAPGPNGKAERVVTNVVMMGMGEPLLNYSAVVPAMRLMLDDNAYGLSRRRVTLSTSGVVPMMDRLGAELPVALAVSLHAPNDALRDELVPLNKKYPLRELMAACQRYLKVAPRDFITFEYCMLDGVNDTEAHARELLAVTRDVPCKFNLIPFNPFPESGLIRSKPEQIKRFAQVLIDAGVVTTVRKTRGDDIDAACGQLAGAVKDRTRLAERTGAAGKIIEVRAV.

Glutamate 95 serves as the catalytic Proton acceptor. A Radical SAM core domain is found at 101 to 345 (EETRGTLCVS…TTVRKTRGDD (245 aa)). A disulfide bond links cysteine 108 and cysteine 350. [4Fe-4S] cluster contacts are provided by cysteine 115, cysteine 119, and cysteine 122. S-adenosyl-L-methionine contacts are provided by residues 176–177 (GE), serine 208, 230–232 (SLH), and asparagine 307. The active-site S-methylcysteine intermediate is cysteine 350.

It belongs to the radical SAM superfamily. RlmN family. It depends on [4Fe-4S] cluster as a cofactor.

It localises to the cytoplasm. The catalysed reaction is adenosine(2503) in 23S rRNA + 2 reduced [2Fe-2S]-[ferredoxin] + 2 S-adenosyl-L-methionine = 2-methyladenosine(2503) in 23S rRNA + 5'-deoxyadenosine + L-methionine + 2 oxidized [2Fe-2S]-[ferredoxin] + S-adenosyl-L-homocysteine. It carries out the reaction adenosine(37) in tRNA + 2 reduced [2Fe-2S]-[ferredoxin] + 2 S-adenosyl-L-methionine = 2-methyladenosine(37) in tRNA + 5'-deoxyadenosine + L-methionine + 2 oxidized [2Fe-2S]-[ferredoxin] + S-adenosyl-L-homocysteine. Functionally, specifically methylates position 2 of adenine 2503 in 23S rRNA and position 2 of adenine 37 in tRNAs. m2A2503 modification seems to play a crucial role in the proofreading step occurring at the peptidyl transferase center and thus would serve to optimize ribosomal fidelity. The chain is Dual-specificity RNA methyltransferase RlmN from Burkholderia cenocepacia (strain ATCC BAA-245 / DSM 16553 / LMG 16656 / NCTC 13227 / J2315 / CF5610) (Burkholderia cepacia (strain J2315)).